We begin with the raw amino-acid sequence, 178 residues long: MRRPFKTDAPVKDGPRSNREIRIPKVQLIGADGENMGVVPTDQALRMAEEAGLDLVEISPNVEPPVCKILDLGKLKYANQKKAAEARKKQKIVEVKEIKMRPNIDTHDYEVKMKAMGRFFDEGDKVKVTLKFRGREMAHQELGMKLLQQVKADTTEFAKVEAEPKLEGRQMMMVLAPK.

Positions 1–20 (MRRPFKTDAPVKDGPRSNRE) are disordered.

This sequence belongs to the IF-3 family. As to quaternary structure, monomer.

It is found in the cytoplasm. Its function is as follows. IF-3 binds to the 30S ribosomal subunit and shifts the equilibrium between 70S ribosomes and their 50S and 30S subunits in favor of the free subunits, thus enhancing the availability of 30S subunits on which protein synthesis initiation begins. In Rhizobium leguminosarum bv. trifolii (strain WSM2304), this protein is Translation initiation factor IF-3.